The chain runs to 177 residues: MSRVAKAPVVVPAGVDVKINGQVITIKGKNGELTRTLNDAVEVKHVDNALTFGPRDGYADGWAQAGTARALLNSMVIGVTEGFTKKLQLVGVGYRAAVKGNVVNLSLGFSHPVDHQLPAGITAECPTQTEIVLKGADKQVIGQVAADLRAYRRPEPYKGKGVRYADEVVRTKEAKKK.

The protein belongs to the universal ribosomal protein uL6 family. Part of the 50S ribosomal subunit.

Functionally, this protein binds to the 23S rRNA, and is important in its secondary structure. It is located near the subunit interface in the base of the L7/L12 stalk, and near the tRNA binding site of the peptidyltransferase center. The protein is Large ribosomal subunit protein uL6 of Salmonella arizonae (strain ATCC BAA-731 / CDC346-86 / RSK2980).